The following is a 225-amino-acid chain: Chalcone--flavanone isomerase 3 (225 aa).

The substrate site is built by Thr-51, Asn-116, and Thr-193.

This sequence belongs to the chalcone isomerase family.

It catalyses the reaction a chalcone = a flavanone.. It participates in secondary metabolite biosynthesis; flavonoid biosynthesis. Catalyzes the intramolecular cyclization of bicyclic chalcones into tricyclic (S)-flavanones. Responsible for the isomerization of 4,2',4',6'-tetrahydroxychalcone (also termed chalcone) into naringenin. This is Chalcone--flavanone isomerase 3 (CHI3) from Lotus japonicus (Lotus corniculatus var. japonicus).